The chain runs to 365 residues: Phosphatidylcholine:ceramide cholinephosphotransferase 2 (365 aa).

Residues 9 to 50 are disordered; it reads LEGHLESQTNNSTNTYTSPTEAVEEEDKNGKGKPKTLSNGLR. Positions 15-28 are enriched in low complexity; it reads SQTNNSTNTYTSPT. The next 5 helical transmembrane spans lie at 80–100, 128–148, 159–179, 219–239, and 248–268; these read GIAFVYALFNLILTTVMITVV, FSVSEINGMVLVGLWLTQWLF, FFFIMGTLYLYRCITMYVTTL, ILCGDFLFSGHTVVLTLTYLF, and FWWYHLVCWLLSAAGIICILV. His-229 is a catalytic residue. Residues His-272 and Asp-276 contribute to the active site. The chain crosses the membrane as a helical span at residues 273–290; sequence YTVDVIIAYYITTRLFWW. At 291-365 the chain is on the cytoplasmic side; sequence YHSMANEKNL…KIGEDNEKST (75 aa). S-palmitoyl cysteine attachment occurs at residues Cys-331, Cys-332, Cys-343, and Cys-348.

It belongs to the sphingomyelin synthase family. Palmitoylated on Cys-331, Cys-332, Cys-343 and Cys-348; which plays an important role in plasma membrane localization. In terms of tissue distribution, expression restricted to late round spermatids and elongating spermatids but not detected in late elongate spermatids and Sertoli cells (at protein level).

Its subcellular location is the cell membrane. The protein resides in the golgi apparatus membrane. The catalysed reaction is an N-acylsphing-4-enine + a 1,2-diacyl-sn-glycero-3-phosphocholine = a sphingomyelin + a 1,2-diacyl-sn-glycerol. It catalyses the reaction an N-acylsphinganine + a 1,2-diacyl-sn-glycero-3-phosphocholine = an N-acylsphinganine-1-phosphocholine + a 1,2-diacyl-sn-glycerol. The enzyme catalyses an N-acyl-(4R)-4-hydroxysphinganine + a 1,2-diacyl-sn-glycero-3-phosphocholine = an N-acyl-(4R)-4-hydroxysphinganine-phosphocholine + a 1,2-diacyl-sn-glycerol. It carries out the reaction an N-acylsphing-4-enine + a 1,2-diacyl-sn-glycero-3-phosphoethanolamine = an N-acylsphing-4-enine 1-phosphoethanolamine + a 1,2-diacyl-sn-glycerol. The catalysed reaction is an N-acylsphinganine + a 1,2-diacyl-sn-glycero-3-phosphoethanolamine = an N-acylsphinganine-1-phosphoethanolamine + a 1,2-diacyl-sn-glycerol. It catalyses the reaction an N-acyl-(4R)-4-hydroxysphinganine + a 1,2-diacyl-sn-glycero-3-phosphoethanolamine = an N-acyl-(4R)-4-hydroxysphinganine-1-phosphoethanolamine + a 1,2-diacyl-sn-glycerol. The enzyme catalyses 1,2-dihexadecanoyl-sn-glycero-3-phosphocholine + an N-acylsphing-4-enine = 1,2-dihexadecanoyl-sn-glycerol + a sphingomyelin. It carries out the reaction 1-(9Z-octadecenoyl)-2-acyl-sn-3-glycerol + a sphingomyelin = a 1-(9Z-octadecenoyl)-2-acyl-sn-glycero-3-phosphocholine + an N-acylsphing-4-enine. The catalysed reaction is N-hexadecanoylsphinganine + a 1,2-diacyl-sn-glycero-3-phosphocholine = N-hexadecanoyl-sphinganine-1-phosphocholine + a 1,2-diacyl-sn-glycerol. It catalyses the reaction N-hexadecanoyl-(4R)-hydroxysphinganine + a 1,2-diacyl-sn-glycero-3-phosphocholine = N-hexadecanoyl-(4R)-hydroxysphinganine-phosphocholine + a 1,2-diacyl-sn-glycerol. The enzyme catalyses N-hexadecanoylsphinganine + a 1,2-diacyl-sn-glycero-3-phosphoethanolamine = N-hexadecanoyl-sphinganine-1-phosphoethanolamine + a 1,2-diacyl-sn-glycerol. It carries out the reaction N-hexadecanoyl-(4R)-hydroxysphinganine + a 1,2-diacyl-sn-glycero-3-phosphoethanolamine = N-hexadecanoyl-(4R)-hydroxysphinganine-1-phosphoethanolamine + a 1,2-diacyl-sn-glycerol. Its pathway is sphingolipid metabolism. Functionally, sphingomyelin synthase that primarily contributes to sphingomyelin synthesis and homeostasis at the plasma membrane. Catalyzes the reversible transfer of phosphocholine moiety in sphingomyelin biosynthesis: in the forward reaction transfers phosphocholine head group of phosphatidylcholine (PC) on to ceramide (CER) to form ceramide phosphocholine (sphingomyelin, SM) and diacylglycerol (DAG) as by-product, and in the reverse reaction transfers phosphocholine from SM to DAG to form PC and CER. The direction of the reaction appears to depend on the levels of CER and DAG in the plasma membrane. Does not use free phosphorylcholine or CDP-choline as donors. Can also transfer phosphoethanolamine head group of phosphatidylethanolamine (PE) on to ceramide (CER) to form ceramide phosphoethanolamine (CPE). Regulates receptor-mediated signal transduction via mitogenic DAG and proapoptotic CER, as well as via SM, a structural component of membrane rafts that serve as platforms for signal transduction and protein sorting. To a lesser extent, plays a role in secretory transport via regulation of DAG pool at the Golgi apparatus and its downstream effects on PRKD1. Required for normal bone matrix mineralization. In Rattus norvegicus (Rat), this protein is Phosphatidylcholine:ceramide cholinephosphotransferase 2 (Sgms2).